The primary structure comprises 825 residues: Zinc finger protein 28 (825 aa).

Positions 26–65 (RPGGGPAAGTVVAPGSPDRGRPRSRNSLASQDQQGAVTSG) are disordered. Low complexity predominate over residues 33-42 (AGTVVAPGSP). The segment covering 51–65 (NSLASQDQQGAVTSG) has biased composition (polar residues). The 72-residue stretch at 103 to 174 (VTFGDVAVVF…KRKMRKGQHL (72 aa)) folds into the KRAB domain. C2H2-type zinc fingers lie at residues 377-399 (FQCN…QRIH), 405-427 (YKCN…QRCH), 433-456 (YECP…RYYH), 462-484 (FDCI…RRIH), 490-512 (YTCE…QRIH), 518-540 (YECE…QRVH), 546-568 (FKCK…WRIH), 574-596 (FECG…QRIH), 602-624 (YECK…QKTH), 630-652 (YECK…QRVH), 658-680 (YKCL…RRLH), 686-708 (YECV…RRCH), 714-736 (YECS…QRIH), and 742-764 (YECK…KRVH). A C2H2-type 15; degenerate zinc finger spans residues 770–792 (YNYKKGRRAFRQTAHFAHHQQIH).

This sequence belongs to the krueppel C2H2-type zinc-finger protein family. In terms of tissue distribution, expressed predominantly in ovary.

It is found in the nucleus. In terms of biological role, may be involved in transcriptional regulation. May have a role in embryonic development. The polypeptide is Zinc finger protein 28 (Zfp28) (Mus musculus (Mouse)).